A 239-amino-acid polypeptide reads, in one-letter code: Sugar fermentation stimulation protein homolog (239 aa).

Belongs to the SfsA family.

This chain is Sugar fermentation stimulation protein homolog, found in Methanobrevibacter smithii (strain ATCC 35061 / DSM 861 / OCM 144 / PS).